Consider the following 182-residue polypeptide: T-cell surface glycoprotein CD3 gamma chain (182 aa).

A signal peptide spans 1-22 (MEQGKGLAVLILAIILLQGTLA). Residues 23–116 (QSIKGNHLVK…CIELNAATIS (94 aa)) are Extracellular-facing. Residues 37–94 (QEDGSVLLTCDAEAKNITWFKDGKMIGFLTEDKKKWNLGSNAKDPRGMYQCKGSQNKS) form the Ig-like domain. Cys-46 and Cys-87 are joined by a disulfide. Residues Asn-52 and Asn-92 are each glycosylated (N-linked (GlcNAc...) asparagine). The helical transmembrane segment at 117-137 (GFLFAEIVSIFVLAVGVYFIA) threads the bilayer. Over 138–182 (GQDGVRQSRASDKQTLLPNDQLYQPLKDREDDQYSHLQGNQLRRN) the chain is Cytoplasmic. Ser-145 carries the phosphoserine modification. The residue at position 148 (Ser-148) is a Phosphoserine; by PKC. An ITAM domain is found at 149–177 (DKQTLLPNDQLYQPLKDREDDQYSHLQGN). A Di-leucine motif motif is present at residues 153-154 (LL).

In terms of assembly, the TCR-CD3 complex is composed of a CD3D/CD3E and a CD3G/CD3E heterodimers that preferentially associate with TCRalpha and TCRbeta, respectively, to form TCRalpha/CD3E/CD3G and TCRbeta/CD3G/CD3E trimers. In turn, the hexamer interacts with CD3Z homodimer to form the TCR-CD3 complex. Alternatively, TCRalpha and TCRbeta can be replaced by TCRgamma and TCRdelta. Post-translationally, phosphorylated on Tyr residues after T-cell receptor triggering by LCK in association with CD4/CD8. Phosphorylated also by PKC; leading to the TCR complex down-regulation. In terms of processing, phosphorylated on Tyr residues after T-cell receptor triggering by LCK in association with CD4/CD8.

It localises to the cell membrane. Its function is as follows. Part of the TCR-CD3 complex present on T-lymphocyte cell surface that plays an essential role in adaptive immune response. When antigen presenting cells (APCs) activate T-cell receptor (TCR), TCR-mediated signals are transmitted across the cell membrane by the CD3 chains CD3D, CD3E, CD3G and CD3Z. All CD3 chains contain immunoreceptor tyrosine-based activation motifs (ITAMs) in their cytoplasmic domain. Upon TCR engagement, these motifs become phosphorylated by Src family protein tyrosine kinases LCK and FYN, resulting in the activation of downstream signaling pathways. In addition to this role of signal transduction in T-cell activation, CD3G plays an essential role in the dynamic regulation of TCR expression at the cell surface. Indeed, constitutive TCR cycling is dependent on the di-leucine-based (diL) receptor-sorting motif present in CD3G. The chain is T-cell surface glycoprotein CD3 gamma chain (CD3G) from Homo sapiens (Human).